The chain runs to 87 residues: uncharacterized protein (87 aa).

A signal peptide spans 1 to 19; the sequence is MLVLQLAVLVTAVYAFVHA. The chain crosses the membrane as a helical span at residues 51–71; the sequence is ILGFVFGVLGIVIAACAAGVY.

This sequence to M.tuberculosis Rv0476.

It localises to the membrane. This is an uncharacterized protein from Mycobacterium leprae (strain TN).